The following is a 199-amino-acid chain: dITP/XTP pyrophosphatase (199 aa).

Position 8-13 (8-13 (SGNAGK)) interacts with substrate. D69 functions as the Proton acceptor in the catalytic mechanism. Position 69 (D69) interacts with Mg(2+). Substrate is bound by residues S70, 154-157 (FGYN), K177, and 182-183 (HR).

Belongs to the HAM1 NTPase family. Homodimer. Mg(2+) is required as a cofactor.

It carries out the reaction XTP + H2O = XMP + diphosphate + H(+). It catalyses the reaction dITP + H2O = dIMP + diphosphate + H(+). The enzyme catalyses ITP + H2O = IMP + diphosphate + H(+). Pyrophosphatase that catalyzes the hydrolysis of nucleoside triphosphates to their monophosphate derivatives, with a high preference for the non-canonical purine nucleotides XTP (xanthosine triphosphate), dITP (deoxyinosine triphosphate) and ITP. Seems to function as a house-cleaning enzyme that removes non-canonical purine nucleotides from the nucleotide pool, thus preventing their incorporation into DNA/RNA and avoiding chromosomal lesions. In Xanthomonas campestris pv. campestris (strain 8004), this protein is dITP/XTP pyrophosphatase.